Reading from the N-terminus, the 390-residue chain is MAIFRDYTNNQIDHDRSIEDRRRHRQLVEKSIKENLGDILSEESIVGESKNKKFKIPIKGIKEYQFVYGKNSKGVASGVGNEKRGEKLGNGNKKLAKGNQGAGNEEGDDIYETEITLEELMDYISEDLNLPNLDQKKYSEIVTETSGKKRGYQTHGIRPRLAKKKTVMSKIARKQGKKRALKELESDEELERFPFREEDLRYYRVKLKPKKDSNAVMLFIMDASGSMDVTKKYLARSYFFVLATFLKRKYNNIAFEFIYHTTVAKRVDEFEFFHKSESGGTYISSGINEALKVIEEKYPPAAWNIYSIYASDGDNWSEDNEKAVAAVKDICEVSNMFGYAELLPSTYTTTMYHKFKKEITNEKFVPVIIKEKKDLWDALKIMLRKELKEE.

Residues 77 to 108 (SGVGNEKRGEKLGNGNKKLAKGNQGAGNEEGD) are disordered. Residues 89 to 103 (GNGNKKLAKGNQGAG) are compositionally biased toward low complexity.

It belongs to the UPF0229 family.

This chain is UPF0229 protein Cbei_0567, found in Clostridium beijerinckii (strain ATCC 51743 / NCIMB 8052) (Clostridium acetobutylicum).